The chain runs to 508 residues: UBX domain-containing protein 4 (508 aa).

The segment at 1 to 200 is interaction with UBQLN1; that stretch reads MLWFQGAIPA…PAEDLNIRVE (200 aa). The Cytoplasmic segment spans residues 1–413; it reads MLWFQGAIPA…VHSSSGDIWT (413 aa). Composition is skewed to polar residues over residues 117 to 151 and 160 to 187; these read SETS…QSRN and TSDT…SGCS. Positions 117-196 are disordered; it reads SETSVANGSQ…SDQRPAEDLN (80 aa). The UBX domain occupies 315–393; sequence ERSTVARIQF…ELAPSASVVV (79 aa). The stretch at 414–434 is an intramembrane region; sequence LLGTVLYPFLAIWRLISNFLF. The Cytoplasmic portion of the chain corresponds to 435–508; it reads SNPPPTQTSV…TWNGNSTQQM (74 aa). The disordered stretch occupies residues 440 to 508; sequence TQTSVRVTSS…TWNGNSTQQM (69 aa). The segment covering 441–458 has biased composition (polar residues); the sequence is QTSVRVTSSEPPNPASSS. Positions 459–491 are enriched in basic and acidic residues; sequence KSEKREPVRKRVLEKRGDDFKKEGKIYRLRTQD. Phosphothreonine is present on T489. Over residues 498 to 508 the composition is skewed to polar residues; that stretch reads NTWNGNSTQQM.

As to quaternary structure, directly interacts with VCP. Interacts with UBQLN1. Forms a complex with VCP and UBQLN1.

Its subcellular location is the endoplasmic reticulum membrane. It is found in the nucleus envelope. Its function is as follows. Involved in endoplasmic reticulum-associated protein degradation (ERAD). Acts as a platform to recruit both UBQLN1 and VCP to the ER during ERAD. The protein is UBX domain-containing protein 4 (UBXN4) of Pongo abelii (Sumatran orangutan).